A 310-amino-acid polypeptide reads, in one-letter code: MHALTTVENPSARLLPGVLALIRDVEAADGHEVLEAHRWIDLANADAESLHGIAVTLDDDTVVGYVHLRRHHRHGIELELLVAPDHRDEAASIVGALVEAASASLETLGPHEIFAWVPRHSRQVIDALEGLGFRADRAVRQLRRPLPLESDHPARPIDCPPFRTFRPGEDEDAWLEVNNRAFAWHPDQGDWDLETLLARERESWFDPAGFLLAEQDGRLVGFCWTKVHAPRSSSALGEIYVIATDPERAPRGLGSCLLVAGLDYLAHHDIPTASLYVEDTNERALRLYDRFGFVVDHEDVRLVWRLPAAS.

2 N-acetyltransferase domains span residues 5–155 (TTVE…HPAR) and 160–309 (PPFR…LPAA). 80–82 (LLV) contributes to the acetyl-CoA binding site. The 1D-myo-inositol 2-(L-cysteinylamino)-2-deoxy-alpha-D-glucopyranoside site is built by Asp187, Lys226, and Glu238. 242–244 (IAT) is a binding site for acetyl-CoA. Tyr276 is a binding site for 1D-myo-inositol 2-(L-cysteinylamino)-2-deoxy-alpha-D-glucopyranoside. 281–286 (NERALR) lines the acetyl-CoA pocket.

This sequence belongs to the acetyltransferase family. MshD subfamily. As to quaternary structure, monomer.

It carries out the reaction 1D-myo-inositol 2-(L-cysteinylamino)-2-deoxy-alpha-D-glucopyranoside + acetyl-CoA = mycothiol + CoA + H(+). Catalyzes the transfer of acetyl from acetyl-CoA to desacetylmycothiol (Cys-GlcN-Ins) to form mycothiol. The chain is Mycothiol acetyltransferase from Acidimicrobium ferrooxidans (strain DSM 10331 / JCM 15462 / NBRC 103882 / ICP).